The primary structure comprises 447 residues: GTPase Der (447 aa).

2 consecutive EngA-type G domains span residues 4–165 (QIIT…PEEE) and 180–357 (LQIV…KIWN). GTP-binding positions include 10 to 17 (GRPNVGKS), 57 to 61 (DTPGL), 119 to 122 (NKCE), 186 to 193 (GRPNAGKS), 233 to 237 (DTAGL), and 298 to 301 (NKWD). Residues 358–443 (KKITTSKLNE…PIRFIYVKTK (86 aa)) form the KH-like domain.

Belongs to the TRAFAC class TrmE-Era-EngA-EngB-Septin-like GTPase superfamily. EngA (Der) GTPase family. As to quaternary structure, associates with the 50S ribosomal subunit.

GTPase that plays an essential role in the late steps of ribosome biogenesis. The sequence is that of GTPase Der from Rickettsia africae (strain ESF-5).